We begin with the raw amino-acid sequence, 241 residues long: Endo-chitosanase B (241 aa).

The N-terminal stretch at 1–17 is a signal peptide; that stretch reads MRLSEILAVALVTGATA. A glycan (N-linked (GlcNAc...) asparagine) is linked at asparagine 86.

Belongs to the glycosyl hydrolase 75 family.

Its subcellular location is the secreted. The enzyme catalyses Endohydrolysis of beta-(1-&gt;4)-linkages between D-glucosamine residues in a partly acetylated chitosan.. Its function is as follows. Chitosanase catalyzing the endo-type cleavage of chitosan, the deacylated form of chitin. Chitosanase may be crucial in the degradation of the deacetylated portion of chitin in the fungal cell wall. Chitoolisaccharides produced by the hydrolysis of partially N-acetylated chitosan are known to have many biological activities, including antibacterial activity, immune-enhancing effects, and elicitor activity. This is Endo-chitosanase B (csnB) from Aspergillus oryzae (strain ATCC 42149 / RIB 40) (Yellow koji mold).